The following is a 458-amino-acid chain: MKQSNSKNTPPIASKKVFIKTYGCQMNVYDSQRMNDSLSAQGYVTTQTPNDADLILVNTCHIREKAAEKLYSDLGRLRMMRQKRTSEKPLMIGVTGCVAQAEGDEILRRSPTVDLVVGPQMYHRLPELLQQAQQGKKIVETNYAVEDKFNHLPPHNKRAVQKRGVSAFLTVQEGCDKFCTFCVVPYTRGAEISRSVEQITDEARQLIEADVKEITLLGQNVNGWHGQSTDGKTWRLGDLLYHLAKLDGLKRLRYTTSHPRDMDESLIAAHRNLDILMPYLHLPVQSGSDRILKAMNRQHKAIDYLNLIEKIRTARPDIAFSGDFIVGFPGETDDDFEETIKLIEQVGYSSAYSFKYSPRPGTLGATMKNQVDEKVKNDRLQRLQALLLDQQHRFLRSKIGQTTDVLIEKDGRHPGQIVGRSPWLLPVVVDTQAPIGTVMAIQITNASSNSFVGEKANS.

The 120-residue stretch at lysine 15–glutamine 134 folds into the MTTase N-terminal domain. Residues cysteine 24, cysteine 60, cysteine 97, cysteine 175, cysteine 179, and cysteine 182 each coordinate [4Fe-4S] cluster. The Radical SAM core domain occupies glutamine 161–arginine 393. One can recognise a TRAM domain in the interval arginine 396–asparagine 457.

This sequence belongs to the methylthiotransferase family. MiaB subfamily. As to quaternary structure, monomer. The cofactor is [4Fe-4S] cluster.

It is found in the cytoplasm. The catalysed reaction is N(6)-dimethylallyladenosine(37) in tRNA + (sulfur carrier)-SH + AH2 + 2 S-adenosyl-L-methionine = 2-methylsulfanyl-N(6)-dimethylallyladenosine(37) in tRNA + (sulfur carrier)-H + 5'-deoxyadenosine + L-methionine + A + S-adenosyl-L-homocysteine + 2 H(+). Its function is as follows. Catalyzes the methylthiolation of N6-(dimethylallyl)adenosine (i(6)A), leading to the formation of 2-methylthio-N6-(dimethylallyl)adenosine (ms(2)i(6)A) at position 37 in tRNAs that read codons beginning with uridine. The protein is tRNA-2-methylthio-N(6)-dimethylallyladenosine synthase of Bartonella bacilliformis (strain ATCC 35685 / KC583 / Herrer 020/F12,63).